The primary structure comprises 395 residues: Elongation factor Tu (395 aa).

Residues 10 to 204 (KPHVNIGTIG…EVDAYIPTPE (195 aa)) enclose the tr-type G domain. Residues 19–26 (GHVDHGKT) are G1. 19–26 (GHVDHGKT) serves as a coordination point for GTP. Threonine 26 serves as a coordination point for Mg(2+). The G2 stretch occupies residues 60 to 64 (GITIS). Residues 81-84 (DCPG) are G3. GTP is bound by residues 81–85 (DCPGH) and 136–139 (NKCD). The segment at 136-139 (NKCD) is G4. The interval 174–176 (SAL) is G5.

This sequence belongs to the TRAFAC class translation factor GTPase superfamily. Classic translation factor GTPase family. EF-Tu/EF-1A subfamily. In terms of assembly, monomer.

The protein localises to the cytoplasm. The enzyme catalyses GTP + H2O = GDP + phosphate + H(+). In terms of biological role, GTP hydrolase that promotes the GTP-dependent binding of aminoacyl-tRNA to the A-site of ribosomes during protein biosynthesis. The chain is Elongation factor Tu from Bacillus cereus (strain G9842).